We begin with the raw amino-acid sequence, 456 residues long: MHRYKKEASNLIKLATPVLIASVAQTGMGFVDTVMAGGVSATDMAAVSVAASIWLPSILFGIGLLMALVPVVAQLNGAGKREQVPFEIQQGAVMALLISIPIIGVLFQTQWILGYMNVDAVMATKTIGYIHAVMFAVPAFLLFQTLRSLTDGLSLTKPAMVIGFIGLLLNIPLNWMFVYGKLGAPALGGVGCGVATAIVYWIMFLLLLFYVTTSHRLRQVQLFTTFHPPQLNAQVKLFKLGFPVAAALFFEVTLFAVVALLVAPLGSTVVAAHQVAINFSSLVFMLPMSIGAATSIRVGHMLGEKSTEGARIASHVGILVGLSTAVFTALLTVILREQIALLYTDNRVVITLAMQLLIFTAIYQCTDAIQVIAAGALRGYKDMRAIFNRTFIAYWLLGLPTGYVLGLTDWIVEPMGAQGFWIGFIVGLSSAAAMLGVRLHWLHRQNDEIQLNYEAR.

Helical transmembrane passes span 11–31 (LIKLATPVLIASVAQTGMGFV), 53–73 (IWLPSILFGIGLLMALVPVVA), 93–113 (VMALLISIPIIGVLFQTQWIL), 126–146 (TIGYIHAVMFAVPAFLLFQTL), 159–179 (AMVIGFIGLLLNIPLNWMFVY), 189–209 (GVGCGVATAIVYWIMFLLLLF), 242–262 (FPVAAALFFEVTLFAVVALLV), 276–296 (AINFSSLVFMLPMSIGAATSI), 315–335 (HVGILVGLSTAVFTALLTVIL), 356–376 (LLIFTAIYQCTDAIQVIAAGA), 391–411 (FIAYWLLGLPTGYVLGLTDWI), and 417–437 (AQGFWIGFIVGLSSAAAMLGV).

This sequence belongs to the multi antimicrobial extrusion (MATE) (TC 2.A.66.1) family.

It is found in the cell inner membrane. In terms of biological role, multidrug efflux pump that functions as a Na(+)/drug antiporter. The sequence is that of Multidrug resistance protein NorM (norM) from Vibrio vulnificus (strain CMCP6).